Reading from the N-terminus, the 551-residue chain is Monocarboxylic acid transporter (551 aa).

Transmembrane regions (helical) follow at residues 18–38 (NPIL…TVVL), 63–83 (GLAI…VGAI), 90–110 (GFLY…LVAE), 144–164 (VTLF…SVLL), 171–191 (WQAV…LLGG), 203–223 (AVLL…KVSG), 267–287 (LDFI…PHVL), 307–327 (IVLI…AAAL), 355–375 (IFMA…VAGL), 411–431 (VVIG…NVAF), 432–452 (LVAL…LYSL), 463–483 (VAAI…SPAV), and 503–523 (NPGL…TLVG).

It belongs to the sodium:solute symporter (SSF) (TC 2.A.21) family.

It localises to the cell membrane. Acts as a secondary carrier for acetate, propionate and pyruvate. Has high affinity for acetate and propionate and lower affinity for pyruvate. Driven by the electrochemical proton potential. This chain is Monocarboxylic acid transporter, found in Corynebacterium glutamicum (strain ATCC 13032 / DSM 20300 / JCM 1318 / BCRC 11384 / CCUG 27702 / LMG 3730 / NBRC 12168 / NCIMB 10025 / NRRL B-2784 / 534).